We begin with the raw amino-acid sequence, 315 residues long: MSSAATALQGPQPNALPAASHLDRLEAESIHILREVAAEFDNPVMLYSVGKDSSVMLHLARKAFHPGTPPFPLLHVDTTWKFREMIAFRDRMAAESGMALRVHINQEGVARGIGPFSHGSAVHTDVMKTQALKQALDRYGFDAAFGGARRDEEASRAKERVYSFRDRHHRWDPKAQRPELWNVYNGRIHKGESIRVFPLSNWTELDIWLYIHREGIPVVPLYFAAERPVVERDGLLIMVDDDRLPLAPGEIPRLERVRFRTLGCYPLTGAIRSEARSVPEIIAEMLDSSSSERQGRAIDHDQSGSMERKKREGYF.

The interval 287–315 is disordered; the sequence is DSSSSERQGRAIDHDQSGSMERKKREGYF. Positions 293–315 are enriched in basic and acidic residues; the sequence is RQGRAIDHDQSGSMERKKREGYF.

It belongs to the PAPS reductase family. CysD subfamily. As to quaternary structure, heterodimer composed of CysD, the smaller subunit, and CysN.

The enzyme catalyses sulfate + ATP + H(+) = adenosine 5'-phosphosulfate + diphosphate. It functions in the pathway sulfur metabolism; hydrogen sulfide biosynthesis; sulfite from sulfate: step 1/3. In terms of biological role, with CysN forms the ATP sulfurylase (ATPS) that catalyzes the adenylation of sulfate producing adenosine 5'-phosphosulfate (APS) and diphosphate, the first enzymatic step in sulfur assimilation pathway. APS synthesis involves the formation of a high-energy phosphoric-sulfuric acid anhydride bond driven by GTP hydrolysis by CysN coupled to ATP hydrolysis by CysD. The protein is Sulfate adenylyltransferase subunit 2 1 of Alkalilimnicola ehrlichii (strain ATCC BAA-1101 / DSM 17681 / MLHE-1).